The primary structure comprises 357 residues: Glutamine synthetase root isozyme B (357 aa).

One can recognise a GS beta-grasp domain in the interval 19-99 (IIAEYIWVGG…VICDVYTPAG (81 aa)). The region spanning 106–357 (KRYNAAKIFS…AETTILWKKS (252 aa)) is the GS catalytic domain.

The protein belongs to the glutamine synthetase family. As to quaternary structure, homooctamer.

Its subcellular location is the cytoplasm. The catalysed reaction is L-glutamate + NH4(+) + ATP = L-glutamine + ADP + phosphate + H(+). This is Glutamine synthetase root isozyme B (GS3B) from Pisum sativum (Garden pea).